A 188-amino-acid polypeptide reads, in one-letter code: ATP synthase subunit b 1 (188 aa).

A helical transmembrane segment spans residues 35 to 55 (VHFGSHLFWLAISFGLFYLFI).

The protein belongs to the ATPase B chain family. F-type ATPases have 2 components, F(1) - the catalytic core - and F(0) - the membrane proton channel. F(1) has five subunits: alpha(3), beta(3), gamma(1), delta(1), epsilon(1). F(0) has three main subunits: a(1), b(2) and c(10-14). The alpha and beta chains form an alternating ring which encloses part of the gamma chain. F(1) is attached to F(0) by a central stalk formed by the gamma and epsilon chains, while a peripheral stalk is formed by the delta and b chains.

The protein localises to the cell inner membrane. Functionally, f(1)F(0) ATP synthase produces ATP from ADP in the presence of a proton or sodium gradient. F-type ATPases consist of two structural domains, F(1) containing the extramembraneous catalytic core and F(0) containing the membrane proton channel, linked together by a central stalk and a peripheral stalk. During catalysis, ATP synthesis in the catalytic domain of F(1) is coupled via a rotary mechanism of the central stalk subunits to proton translocation. Its function is as follows. Component of the F(0) channel, it forms part of the peripheral stalk, linking F(1) to F(0). This is ATP synthase subunit b 1 from Bartonella henselae (strain ATCC 49882 / DSM 28221 / CCUG 30454 / Houston 1) (Rochalimaea henselae).